A 140-amino-acid chain; its full sequence is 3-hydroxyacyl-[acyl-carrier-protein] dehydratase FabZ (140 aa).

The active site involves His47.

It belongs to the thioester dehydratase family. FabZ subfamily.

The protein resides in the cytoplasm. It carries out the reaction a (3R)-hydroxyacyl-[ACP] = a (2E)-enoyl-[ACP] + H2O. In terms of biological role, involved in unsaturated fatty acids biosynthesis. Catalyzes the dehydration of short chain beta-hydroxyacyl-ACPs and long chain saturated and unsaturated beta-hydroxyacyl-ACPs. The chain is 3-hydroxyacyl-[acyl-carrier-protein] dehydratase FabZ from Streptococcus suis (strain 98HAH33).